Reading from the N-terminus, the 371-residue chain is Protein STRICTOSIDINE SYNTHASE-LIKE 7 (371 aa).

The signal sequence occupies residues 1–25 (MPVLFSSRSLILSIIVPLLISIALY). Residues Asn101, Asn137, and Asn285 are each glycosylated (N-linked (GlcNAc...) asparagine). At Tyr303 the chain carries Phosphotyrosine.

The protein belongs to the strictosidine synthase family.

It is found in the vacuole. This chain is Protein STRICTOSIDINE SYNTHASE-LIKE 7, found in Arabidopsis thaliana (Mouse-ear cress).